The primary structure comprises 198 residues: NAD(P)H dehydrogenase (quinone) (198 aa).

The 186-residue stretch at 4-189 (VLVLYYSMYG…SIARYQGEYV (186 aa)) folds into the Flavodoxin-like domain. Residues 10–15 (SMYGHI) and 78–80 (TRF) contribute to the FMN site. Tyr12 lines the NAD(+) pocket. Trp98 is a binding site for substrate. FMN-binding positions include 113–118 (STGTGG) and His133.

The protein belongs to the WrbA family. The cofactor is FMN.

It catalyses the reaction a quinone + NADH + H(+) = a quinol + NAD(+). The catalysed reaction is a quinone + NADPH + H(+) = a quinol + NADP(+). The sequence is that of NAD(P)H dehydrogenase (quinone) from Escherichia fergusonii (strain ATCC 35469 / DSM 13698 / CCUG 18766 / IAM 14443 / JCM 21226 / LMG 7866 / NBRC 102419 / NCTC 12128 / CDC 0568-73).